Consider the following 556-residue polypeptide: RING finger protein 207 (556 aa).

The segment at 25-64 (CPLCHAQYERPCLLDCFHEFCAGCLRGRAADGRLACPLCQ) adopts an RING-type zinc-finger fold. The B box-type; atypical zinc finger occupies 93–145 (TEVVRCANCDLECGKQDAETTYFCNTCGQPLCARCRDETHRARMFARHDIVAL). Zn(2+) contacts are provided by cysteine 98, cysteine 101, cysteine 127, and histidine 132. Coiled-coil stretches lie at residues 218–273 (TREA…NKAE) and 385–425 (FTEH…SLIK). The tract at residues 517–556 (FQVPVDEPSDHPQNTHDDGVNAEAPARVSTLKPAMEKEVS) is disordered. Basic and acidic residues predominate over residues 524 to 535 (PSDHPQNTHDDG).

As to quaternary structure, interacts with the core-glycosylated, but not the fully glycosylated form of KCNH2/HERG. Interacts with DNAJA1 and HSPA8. Interacts (via the C-terminus) with HSPA1A; this interaction additively increases KCNH2 expression.

It localises to the cytoplasm. Its function is as follows. Plays a role in cardiac repolarization possibly by stabilizing membrane expression of the potassium channel KCNH2/HERG, or by assisting its synthesis, folding or export from the endoplasmic reticulum, in a heat shock protein-dependent manner. This chain is RING finger protein 207 (RNF207), found in Bos taurus (Bovine).